The chain runs to 338 residues: Glycerol-3-phosphate dehydrogenase [NAD(P)+] (338 aa).

NADPH-binding residues include serine 13, tryptophan 14, and lysine 108. Sn-glycerol 3-phosphate contacts are provided by lysine 108, glycine 139, and serine 141. Residue alanine 143 participates in NADPH binding. 5 residues coordinate sn-glycerol 3-phosphate: lysine 194, aspartate 247, serine 257, arginine 258, and asparagine 259. Residue lysine 194 is the Proton acceptor of the active site. An NADPH-binding site is contributed by arginine 258. NADPH contacts are provided by valine 282 and glutamate 284.

It is found in the cytoplasm. The catalysed reaction is sn-glycerol 3-phosphate + NAD(+) = dihydroxyacetone phosphate + NADH + H(+). It catalyses the reaction sn-glycerol 3-phosphate + NADP(+) = dihydroxyacetone phosphate + NADPH + H(+). The protein operates within membrane lipid metabolism; glycerophospholipid metabolism. Its function is as follows. Catalyzes the reduction of the glycolytic intermediate dihydroxyacetone phosphate (DHAP) to sn-glycerol 3-phosphate (G3P), the key precursor for phospholipid synthesis. The polypeptide is Glycerol-3-phosphate dehydrogenase [NAD(P)+] (Streptococcus pyogenes serotype M6 (strain ATCC BAA-946 / MGAS10394)).